A 289-amino-acid polypeptide reads, in one-letter code: 3-methyl-2-oxobutanoate hydroxymethyltransferase (289 aa).

The span at 1–15 shows a compositional bias: polar residues; that stretch reads MSTTFQLDTSTSRAN. Residues 1–20 are disordered; it reads MSTTFQLDTSTSRANPTPAP. 2 residues coordinate Mg(2+): Asp67 and Asp106. 3-methyl-2-oxobutanoate is bound by residues 67-68, Asp106, and Lys136; that span reads DS. Glu138 is a Mg(2+) binding site. Glu205 acts as the Proton acceptor in catalysis.

The protein belongs to the PanB family. In terms of assembly, homodecamer; pentamer of dimers. Mg(2+) is required as a cofactor.

It is found in the cytoplasm. The enzyme catalyses 3-methyl-2-oxobutanoate + (6R)-5,10-methylene-5,6,7,8-tetrahydrofolate + H2O = 2-dehydropantoate + (6S)-5,6,7,8-tetrahydrofolate. Its pathway is cofactor biosynthesis; (R)-pantothenate biosynthesis; (R)-pantoate from 3-methyl-2-oxobutanoate: step 1/2. Its function is as follows. Catalyzes the reversible reaction in which hydroxymethyl group from 5,10-methylenetetrahydrofolate is transferred onto alpha-ketoisovalerate to form ketopantoate. The protein is 3-methyl-2-oxobutanoate hydroxymethyltransferase of Novosphingobium aromaticivorans (strain ATCC 700278 / DSM 12444 / CCUG 56034 / CIP 105152 / NBRC 16084 / F199).